The sequence spans 323 residues: tRNA dimethylallyltransferase (323 aa).

13–20 (GPTASGKT) contacts ATP. 15-20 (TASGKT) contacts substrate. Interaction with substrate tRNA regions lie at residues 42–45 (DSAL), 166–170 (QRIQR), 251–256 (RCVGYR), and 284–291 (KRQITWLR).

It belongs to the IPP transferase family. Monomer. Requires Mg(2+) as cofactor.

It catalyses the reaction adenosine(37) in tRNA + dimethylallyl diphosphate = N(6)-dimethylallyladenosine(37) in tRNA + diphosphate. Catalyzes the transfer of a dimethylallyl group onto the adenine at position 37 in tRNAs that read codons beginning with uridine, leading to the formation of N6-(dimethylallyl)adenosine (i(6)A). This Acidovorax sp. (strain JS42) protein is tRNA dimethylallyltransferase.